Reading from the N-terminus, the 435-residue chain is Asparagine--tRNA ligase (435 aa).

This sequence belongs to the class-II aminoacyl-tRNA synthetase family. Homodimer.

It localises to the cytoplasm. It carries out the reaction tRNA(Asn) + L-asparagine + ATP = L-asparaginyl-tRNA(Asn) + AMP + diphosphate + H(+). The chain is Asparagine--tRNA ligase from Leptospira interrogans serogroup Icterohaemorrhagiae serovar Lai (strain 56601).